The chain runs to 404 residues: MVILSKVAAVAVGLSTVASALPTGPSHSPHARRGFTINQITRQTARVGPKTASFPAIYSRALAKYGGTVPAHLKSAVASGHGTVVTSPEPNDIEYLTPVNIGGTTLNLDFDTGSADLWVFSEELPKSEQTGHDVYKPSGNASKIAGASWDISYGDGSSASGDVYQDTVTVGGVTAQGQAVEAASKISDQFVQDKNNDGLLGLAFSSINTVKPKPQTTFFDTVKDQLDAPLFAVTLKYHAPGSYDFGFIDKSKFTGELAYADVDDSQGFWQFTADGYSVGKGDAQKAPITGIADTGTTLVMLDDEIVDAYYKQVQGAKNDASAGGYVFPCETELPEFTVVIGSYNAVIPGKHINYAPLQEGSSTCVGGIQSNSGLGLSILGDVFLKSQYVVFDSQGPRLGFAAQA.

A signal peptide spans 1–20; that stretch reads MVILSKVAAVAVGLSTVASA. The propeptide at 21-77 is activation peptide; sequence LPTGPSHSPHARRGFTINQITRQTARVGPKTASFPAIYSRALAKYGGTVPAHLKSAV. A Peptidase A1 domain is found at 95–401; sequence YLTPVNIGGT…DSQGPRLGFA (307 aa). Aspartate 111 is an active-site residue. A glycan (N-linked (GlcNAc...) asparagine) is linked at asparagine 140. Aspartate 293 is an active-site residue. Cysteines 329 and 364 form a disulfide.

The protein belongs to the peptidase A1 family. In terms of assembly, monomer.

Its subcellular location is the secreted. It carries out the reaction Hydrolysis of proteins with broad specificity. Generally favors hydrophobic residues in P1 and P1', but also accepts Lys in P1, which leads to activation of trypsinogen. Does not clot milk.. Secreted aspartic endopeptidase that allows assimilation of proteinaceous substrates. The scissile peptide bond is attacked by a nucleophilic water molecule activated by two aspartic residues in the active site. Shows a broad primary substrate specificity. Favors hydrophobic residues at the P1 and P1' positions, but also accepts a lysine residue in the P1 position, leading to the activation of trypsinogen and chymotrypsinogen A. This is Aspergillopepsin-1 (pepA) from Aspergillus flavus (strain ATCC 200026 / FGSC A1120 / IAM 13836 / NRRL 3357 / JCM 12722 / SRRC 167).